The chain runs to 368 residues: DNA-directed RNA polymerase II subunit GRINL1A (368 aa).

Residues K29 to V68 are important for transcription repressor activity. Composition is skewed to polar residues over residues S116 to G131, G205 to G224, and Q258 to S273. Disordered stretches follow at residues S116–S186, D203–K227, and P255–K282. The tract at residues K227 to H298 is interaction with Pol II. S270 carries the post-translational modification Phosphoserine. Residues M299–K314 are important for transcription repressor activity. The stretch at T301–R335 forms a coiled coil. The tract at residues Q315–M340 is interaction with Pol II. Residues K339–F368 are disordered. Over residues D358–F368 the composition is skewed to acidic residues.

Belongs to the GRINL1 family. As to quaternary structure, component of the Pol II(G) complex, which contains the RNA polymerase II (Pol II) core complex subunits and POLR2M isoform 1. Pol II(G) appears to be an abundant form of Pol II. Dephosphorylated at Ser-270 by the PNUTS-PP1 complex, promoting RNA polymerase II transcription pause-release. Detected in adult an fetal brain. Detected in heart, kidney, skeletal muscle, small intestine, lung, prostate and testis.

Its subcellular location is the nucleus. Its function is as follows. Appears to be a stable component of the Pol II(G) complex form of RNA polymerase II (Pol II). Pol II synthesizes mRNA precursors and many functional non-coding RNAs and is the central component of the basal RNA polymerase II transcription machinery. May play a role in the Mediator complex-dependent regulation of transcription activation. Acts as a negative regulator of transcriptional activation; this repression is relieved by the Mediator complex, which restores Pol II(G) activator-dependent transcription to a level equivalent to that of Pol II. The sequence is that of DNA-directed RNA polymerase II subunit GRINL1A (POLR2M) from Homo sapiens (Human).